The primary structure comprises 269 residues: Ubiquinone/menaquinone biosynthesis C-methyltransferase UbiE (269 aa).

S-adenosyl-L-methionine contacts are provided by residues Thr-92, Asp-113, and 141 to 142 (NA).

This sequence belongs to the class I-like SAM-binding methyltransferase superfamily. MenG/UbiE family.

It catalyses the reaction a 2-demethylmenaquinol + S-adenosyl-L-methionine = a menaquinol + S-adenosyl-L-homocysteine + H(+). The enzyme catalyses a 2-methoxy-6-(all-trans-polyprenyl)benzene-1,4-diol + S-adenosyl-L-methionine = a 5-methoxy-2-methyl-3-(all-trans-polyprenyl)benzene-1,4-diol + S-adenosyl-L-homocysteine + H(+). It participates in quinol/quinone metabolism; menaquinone biosynthesis; menaquinol from 1,4-dihydroxy-2-naphthoate: step 2/2. Its pathway is cofactor biosynthesis; ubiquinone biosynthesis. Functionally, methyltransferase required for the conversion of demethylmenaquinol (DMKH2) to menaquinol (MKH2) and the conversion of 2-polyprenyl-6-methoxy-1,4-benzoquinol (DDMQH2) to 2-polyprenyl-3-methyl-6-methoxy-1,4-benzoquinol (DMQH2). The protein is Ubiquinone/menaquinone biosynthesis C-methyltransferase UbiE of Brucella canis (strain ATCC 23365 / NCTC 10854 / RM-666).